The primary structure comprises 285 residues: Hydroxyethylthiazole kinase (285 aa).

Met-43 serves as a coordination point for substrate. ATP contacts are provided by Lys-119 and Ser-172. Gly-199 serves as a coordination point for substrate.

Belongs to the Thz kinase family. Mg(2+) serves as cofactor.

The catalysed reaction is 5-(2-hydroxyethyl)-4-methylthiazole + ATP = 4-methyl-5-(2-phosphooxyethyl)-thiazole + ADP + H(+). It participates in cofactor biosynthesis; thiamine diphosphate biosynthesis; 4-methyl-5-(2-phosphoethyl)-thiazole from 5-(2-hydroxyethyl)-4-methylthiazole: step 1/1. Functionally, catalyzes the phosphorylation of the hydroxyl group of 4-methyl-5-beta-hydroxyethylthiazole (THZ). This Desulfovibrio desulfuricans (strain ATCC 27774 / DSM 6949 / MB) protein is Hydroxyethylthiazole kinase.